The sequence spans 140 residues: Fluoride-specific ion channel FluC 1 (140 aa).

The next 4 helical transmembrane spans lie at 4–24, 32–52, 70–90, and 99–119; these read LYLAVGGFCGAVGRYFLASFI, FPLATWIINLGGCLAMGFILT, TGMLGAFTTFSTFSVETLHLL, and LLYLFASLAGGLICMQTGIFL. Glycine 74 and threonine 77 together coordinate Na(+).

This sequence belongs to the fluoride channel Fluc/FEX (TC 1.A.43) family.

It is found in the cell membrane. The enzyme catalyses fluoride(in) = fluoride(out). Na(+) is not transported, but it plays an essential structural role and its presence is essential for fluoride channel function. Functionally, fluoride-specific ion channel. Important for reducing fluoride concentration in the cell, thus reducing its toxicity. The protein is Fluoride-specific ion channel FluC 1 of Moorella thermoacetica (strain ATCC 39073 / JCM 9320).